The chain runs to 174 residues: UPF0316 protein lwe1794 (174 aa).

3 helical membrane passes run 4–24 (GLFI…IYTV), 36–56 (LAAL…SLVL), and 62–82 (IANV…GMKI).

It belongs to the UPF0316 family.

The protein resides in the cell membrane. In Listeria welshimeri serovar 6b (strain ATCC 35897 / DSM 20650 / CCUG 15529 / CIP 8149 / NCTC 11857 / SLCC 5334 / V8), this protein is UPF0316 protein lwe1794.